We begin with the raw amino-acid sequence, 703 residues long: UvrABC system protein B (703 aa).

Residues 33–190 (TRIENGENDV…RRFVAMQYKR (158 aa)) enclose the Helicase ATP-binding domain. ATP is bound at residue 46-53 (GATGTGKT). The Beta-hairpin signature appears at 99–122 (YYDYYQPEAYIPQTDTYIEKDSNI). In terms of domain architecture, Helicase C-terminal spans 436–589 (QIDDLLAEIK…QIAYNQEHGI (154 aa)). A UVR domain is found at 659-694 (ADLIRQLSEQMHTAAEQLQFELAARLRDEIRDLKKE).

The protein belongs to the UvrB family. Forms a heterotetramer with UvrA during the search for lesions. Interacts with UvrC in an incision complex.

The protein localises to the cytoplasm. The UvrABC repair system catalyzes the recognition and processing of DNA lesions. A damage recognition complex composed of 2 UvrA and 2 UvrB subunits scans DNA for abnormalities. Upon binding of the UvrA(2)B(2) complex to a putative damaged site, the DNA wraps around one UvrB monomer. DNA wrap is dependent on ATP binding by UvrB and probably causes local melting of the DNA helix, facilitating insertion of UvrB beta-hairpin between the DNA strands. Then UvrB probes one DNA strand for the presence of a lesion. If a lesion is found the UvrA subunits dissociate and the UvrB-DNA preincision complex is formed. This complex is subsequently bound by UvrC and the second UvrB is released. If no lesion is found, the DNA wraps around the other UvrB subunit that will check the other stand for damage. In Bifidobacterium longum subsp. infantis (strain ATCC 15697 / DSM 20088 / JCM 1222 / NCTC 11817 / S12), this protein is UvrABC system protein B.